We begin with the raw amino-acid sequence, 913 residues long: Vacuolar membrane protease (913 aa).

Residues 1–15 (MMANYFRSTFKFRKT) lie on the Cytoplasmic side of the membrane. A helical membrane pass occupies residues 16-36 (TVSTLFVLTVLVISILTWFDA). The Vacuolar segment spans residues 37–364 (NKYKSNLPDD…FFVVSARQLY (328 aa)). An N-linked (GlcNAc...) asparagine glycan is attached at asparagine 117. Positions 152 and 164 each coordinate Zn(2+). The active-site Proton acceptor is the glutamate 196. Positions 197, 222, and 296 each coordinate Zn(2+). The helical transmembrane segment at 365 to 385 (VWNIVLLCVLPITLILLRIVC) threads the bilayer. At 386–394 (NKLGTWRMP) the chain is on the cytoplasmic side. A helical membrane pass occupies residues 395–415 (TSALFTRIPFALFVSSFTIYF). Residues 416–431 (TKELLLQLNPTIWSRN) lie on the Vacuolar side of the membrane. The chain crosses the membrane as a helical span at residues 432–452 (FILPFLFCISEFLLINTLVLA). At 453–465 (LFEYLWPIQDFKT) the chain is on the cytoplasmic side. A helical transmembrane segment spans residues 466 to 486 (LSLLELSAIAWLFLLKCTWDL). Residues 487 to 494 (SSSGFKAT) lie on the Vacuolar side of the membrane. Residues 495 to 515 (GVYPVTVFYLFISLASMFGLC) traverse the membrane as a helical segment. The Cytoplasmic segment spans residues 516-600 (SMCFGKRPNA…TLNYDWSAQY (85 aa)). The segment covering 540–552 (NDTHSIECPRQPE) has biased composition (basic and acidic residues). Residues 540-578 (NDTHSIECPRQPEDSETTETSPLINTPSSSVQSSPIASS) are disordered. Residues 557-566 (TETSPLINTP) are compositionally biased toward polar residues. Positions 567–578 (SSSVQSSPIASS) are enriched in low complexity. Residues 601–621 (LLAVPINAFLIWESLFNLFDA) traverse the membrane as a helical segment. Residues 622-634 (LSMTVQESNKATE) are Vacuolar-facing. A helical membrane pass occupies residues 635 to 655 (AVFKFAIYGAIFLCSPLLPFT). Over 656-660 (TKLNR) the chain is Cytoplasmic. The chain crosses the membrane as a helical span at residues 661–681 (FVVIILGVVTILAASFSLFAA). Over 682–913 (PYTELAPLKL…MVTIHKYLEL (232 aa)) the chain is Vacuolar. Residues asparagine 729, asparagine 794, and asparagine 810 are each glycosylated (N-linked (GlcNAc...) asparagine).

Belongs to the peptidase M28 family. The cofactor is Zn(2+).

The protein localises to the vacuole membrane. May be involved in vacuolar sorting and osmoregulation. The protein is Vacuolar membrane protease of Kluyveromyces lactis (strain ATCC 8585 / CBS 2359 / DSM 70799 / NBRC 1267 / NRRL Y-1140 / WM37) (Yeast).